The sequence spans 313 residues: Cytochrome c biogenesis protein CcsA (313 aa).

Helical transmembrane passes span 13–35, 43–63, 67–87, 96–116, 142–162, 219–239, 252–269, and 280–300; these read ISFS…EIAG, GMIA…IYSG, LSNL…IHMI, FLSS…TSGL, MLLS…LLVI, VIGI…VWAN, ETWA…LHTR, and AIVA…VNLL.

The protein belongs to the CcmF/CycK/Ccl1/NrfE/CcsA family. May interact with Ccs1.

It localises to the plastid. The protein localises to the chloroplast thylakoid membrane. In terms of biological role, required during biogenesis of c-type cytochromes (cytochrome c6 and cytochrome f) at the step of heme attachment. This Amborella trichopoda protein is Cytochrome c biogenesis protein CcsA.